Here is a 133-residue protein sequence, read N- to C-terminus: Large-conductance mechanosensitive channel (133 aa).

3 helical membrane-spanning segments follow: residues 8–28, 30–50, and 73–93; these read FAMK…GAFG, IVTS…LGGI, and GQFI…FLFI.

It belongs to the MscL family. As to quaternary structure, homopentamer.

The protein resides in the cell membrane. Channel that opens in response to stretch forces in the membrane lipid bilayer. May participate in the regulation of osmotic pressure changes within the cell. The chain is Large-conductance mechanosensitive channel from Hathewaya histolytica (Clostridium histolyticum).